We begin with the raw amino-acid sequence, 984 residues long: MIEDEKAGLQPMDISDASVFFFQADVESKDFLTSLFDCEGKSDDRMLRYADAIIDVQNLNFDVSPQCLQSNIAEIITKFVLLSQDGSRRGLSRSFNFIDPDIIAGCREEDAIEFLLINFVRCHHELGKSGTSNCYKKTLESTRKAVFSVFVMIQRGYLESQLRSQHASLVFTKRLLEDTVSNVFLRTLVEYLASTDECDEDAITETFNPIFGILRSGIICQRFEDNKDEIVRQILRVMNLLLSIRLPSNGPRPLSNLLVNREDFLPTPSEKIQGREFGLMSFLGPFFSYGLESSARRPNHRVFVDCEEDARKYDGSVNTEQKLYFQRMDPIRTMLHQLMLPLASDQGSRNKTLRWIATIISTNDIRTRSHYDPSDVLCDHYMTNFLSVMYMFSEKIDLSKIIVDYPFLPSSLINISKETRLKMDESGAVAFASQFADRPDEYHFSTVCFFLTIAAQRLVIPPLMNQISEYSRHLKELKHKINALKEKLNTVSGFERAEVEKKLNYETEHWKLMSRHLLCVKTQAQDPALMASSMDFVDKQMKFILNLLCDNLDLLGDDSQLPTEVSQMFCALPEYFLEDALDFYIFAISNGMKLLMERNADWISRLTVLFTQYHYIKSPFLVSKLVRVLSSIQPPLWFNVVRLRMAQENLLMCMIKFYSDFEDNGDFYEKFNVRGNIQYMLEKMEEDMFYKGKFMDMARECGAEFIRFVNMVINDATWCIDESLSGLKSIHDVEKKMANKVEWDNTDQEIRNQDLGVYEEAKRKVKGWLGTAKSNLKLLLSITVNSPEPFRTPVLGERLAAMLNHNLSQLIGSKASELKVKDPRSYGWEPREFVSLLISIYLKLNMPAFVKYIAYDERTYSPEFFHNAIECMRKNSIVGFSQLESFEHLAEDVKKEYEAKAELEEEYDDVPEEFKDPIMDAIMVDPVKLPSGHVMDRAVIERHLLSTPNNPFNRAPLSHNELSPDSELKAKIQEWICQKRNSKK.

A U-box domain is found at Asp909–Ser982.

It belongs to the ubiquitin conjugation factor E4 family. As to quaternary structure, forms a complex composed of deubiquitinating enzyme atx-3, E4 ubiquitin-protein ligase ufd-2 and cdc-48.1; within the complex interacts with atx-3 and cdc-48.1 (via DDDLYN motif). Forms a complex composed of cdc-48.1, myosin chaperone unc-45, ubiquitin-protein ligases ufd-2 and chn-1; the complex targets myosin chaperone unc-45 for proteasomal degradation; within the complex interacts with cdc-48.1 (via DDDLYN motif), chn-1 and unc-45. Forms a complex composed of unc-45 and myosin heavy chain B unc-54; the complex targets unfolded unc-54 for proteasomal degradation; within the complex interacts with unc-45 (via TPR domain) and unc-54. Interacts with cdc-48.2 (via DDDLYN motif). In terms of tissue distribution, expressed in the germline (at protein level).

The protein localises to the cytoplasm. Its subcellular location is the nucleus membrane. It localises to the nucleus. It is found in the nucleolus. It catalyses the reaction S-ubiquitinyl-[E2 ubiquitin-conjugating enzyme]-L-cysteine + [acceptor protein]-L-lysine = [E2 ubiquitin-conjugating enzyme]-L-cysteine + N(6)-ubiquitinyl-[acceptor protein]-L-lysine.. Its pathway is protein modification; protein ubiquitination. Its function is as follows. Acts as an E4 ubiquitin ligase mediating the assembly of polyubiquitin chains on substrates ubiquitinated by another E3 ubiquitin ligase. The elongation of preexisting ubiquitin chains preferentially targets ubiquitin 'Lys-29' and 'Lys-48' residues. Also functions as an E3 ligase in conjunction with specific E1 and E2 ligases. Probably by regulating protein ubiquitination at DNA damage repair sites, coordinates DNA double-strand-break repair and apoptosis in the germline. Required for germline apoptosis in response to DNA damage downstream of cep-1. Involved in the resolution of DNA-repair sites by promoting the release of rad-51 from DNA damage foci. In association with protein-ligase chn-1, acts as an E3/E4 ligase to poly-ubiquitinate lysine residues in the UCS domain of myosin chaperone unc-45. By targeting myosin chaperone unc-45 for proteasomal degradation, regulates myosin assembly in body wall muscles in association with cdc-48.1 and chn-1. However, in a contrasting study, acts as an E3 ligase, independently of chn-1, to poly-ubiquitinate unc-45 without promoting unc-45 proteasomal degradation. Instead, uses unc-45 as an adapter protein to recruit and poly-ubiquitinate unfolded myosin heavy chain B unc-54. The chain is Ubiquitin conjugation factor E4 ufd-2 from Caenorhabditis elegans.